We begin with the raw amino-acid sequence, 220 residues long: Competence protein ComFC (220 aa).

It belongs to the ComF/GntX family. As to quaternary structure, monomer and dimer in solution. Interacts with ComFA and DprA; ComFA-ComFC form rings about 150 Angstroms in diameter with apparent 6-fold symmetry.

In terms of biological role, involved in transformation (genetic competence for DNA uptake). This chain is Competence protein ComFC, found in Streptococcus pneumoniae (strain ATCC BAA-255 / R6).